A 505-amino-acid polypeptide reads, in one-letter code: Maturase K (505 aa).

The protein belongs to the intron maturase 2 family. MatK subfamily.

Its subcellular location is the plastid. The protein localises to the chloroplast. Usually encoded in the trnK tRNA gene intron. Probably assists in splicing its own and other chloroplast group II introns. The polypeptide is Maturase K (Chiococca alba (West Indian milkberry)).